Here is a 359-residue protein sequence, read N- to C-terminus: MNTPRVVVAGGGTAGHIEPALAVAESLRHRGAEVVALGTTKGLETSIVPERGFELRLINPVPVPRKINADLFKLPFRLLATISQTRKILKEFDTDVVIGFGGYVAAPAYIAAKLQKIPFIVHEANARSGMANKLGVRLGGMGLNAVANSGMPGTVVGIPIRSSLSGDNTALDRAQQLWGLDPEKKTILITGGSQGARSINAAVAEGIDAVLADPDVQVLHAYGRKNSAPEAQERYVPVAYIDDMAAAYAIADLVIGRSGAMTVAENTAAGIPAIYVPLPHGNGEQGLNAQPLVEEGAAVLVADSEFNGEAFSSLAAKILGDQETYNTMVIAAKESGTANAAETIADIIYSIVKNHDRNK.

UDP-N-acetyl-alpha-D-glucosamine-binding positions include 13 to 15 (TAG), N125, R161, S193, I241, and Q285.

It belongs to the glycosyltransferase 28 family. MurG subfamily.

It localises to the cell membrane. It catalyses the reaction di-trans,octa-cis-undecaprenyl diphospho-N-acetyl-alpha-D-muramoyl-L-alanyl-D-glutamyl-meso-2,6-diaminopimeloyl-D-alanyl-D-alanine + UDP-N-acetyl-alpha-D-glucosamine = di-trans,octa-cis-undecaprenyl diphospho-[N-acetyl-alpha-D-glucosaminyl-(1-&gt;4)]-N-acetyl-alpha-D-muramoyl-L-alanyl-D-glutamyl-meso-2,6-diaminopimeloyl-D-alanyl-D-alanine + UDP + H(+). Its pathway is cell wall biogenesis; peptidoglycan biosynthesis. Cell wall formation. Catalyzes the transfer of a GlcNAc subunit on undecaprenyl-pyrophosphoryl-MurNAc-pentapeptide (lipid intermediate I) to form undecaprenyl-pyrophosphoryl-MurNAc-(pentapeptide)GlcNAc (lipid intermediate II). The chain is UDP-N-acetylglucosamine--N-acetylmuramyl-(pentapeptide) pyrophosphoryl-undecaprenol N-acetylglucosamine transferase from Corynebacterium diphtheriae (strain ATCC 700971 / NCTC 13129 / Biotype gravis).